The chain runs to 241 residues: L-aspartate dehydrogenase (241 aa).

NAD(+) is bound by residues Ala109 and Asn164. His193 is a catalytic residue.

It belongs to the L-aspartate dehydrogenase family.

The catalysed reaction is L-aspartate + NADP(+) + H2O = oxaloacetate + NH4(+) + NADPH + H(+). The enzyme catalyses L-aspartate + NAD(+) + H2O = oxaloacetate + NH4(+) + NADH + H(+). The protein operates within cofactor biosynthesis; NAD(+) biosynthesis; iminoaspartate from L-aspartate (dehydrogenase route): step 1/1. In terms of biological role, specifically catalyzes the NAD or NADP-dependent dehydrogenation of L-aspartate to iminoaspartate. The chain is L-aspartate dehydrogenase from Thermotoga sp. (strain RQ2).